Here is a 366-residue protein sequence, read N- to C-terminus: Short-chain collagen C4 (366 aa).

Residues 1-14 (DTGPQGPQGVAGPP) are compositionally biased toward low complexity. 2 triple-helical region regions span residues 1 to 23 (DTGPQGPQGVAGPPGIDGAKGDK) and 40 to 210 (GPPG…NGAV). The interval 1-207 (DTGPQGPQGV…QGPQGAPGSN (207 aa)) is disordered. Over residues 28-45 (YPPPPTCPTCPAGPPGAP) the composition is skewed to pro residues. Low complexity-rich tracts occupy residues 75 to 90 (PGNDGQPGAPGAPGYD) and 99 to 110 (TGAPGPQGPKGD). Residues 138-149 (DGQDGAKGDKGD) are compositionally biased toward basic and acidic residues. Low complexity-rich tracts occupy residues 150–168 (QGPAGTPGAPGKDGAQGPA) and 189–201 (QGPKGDVGPQGPQ).

Its subcellular location is the secreted. It localises to the extracellular space. The protein localises to the extracellular matrix. This chain is Short-chain collagen C4, found in Ephydatia muelleri (Mueller's freshwater sponge).